The primary structure comprises 241 residues: Chloride intracellular channel protein 1 (241 aa).

At Ala-2 the chain carries N-acetylalanine. Residues 2-90 are required for insertion into the membrane; the sequence is AEEQPQVELF…EEFLEAVLCP (89 aa). Lys-13 carries the N6-acetyllysine modification. Positions 24-27 match the G-site motif; sequence CPFS. Cys-24 and Cys-59 form a disulfide bridge. The chain crosses the membrane as a helical span at residues 26-46; the sequence is FSQRLFMVLWLKGVTFNVTTV. Positions 93–233 constitute a GST C-terminal domain; that stretch reads YPKLAALNPE…PDDEEIELAY (141 aa). Lys-119 carries the post-translational modification N6-acetyllysine. Ser-121 is subject to Phosphoserine. Lys-131 carries the post-translational modification N6-acetyllysine. Ser-156 and Ser-211 each carry phosphoserine. Tyr-233 is modified (phosphotyrosine).

It belongs to the chloride channel CLIC family. Monomer. Homodimer (in vitro). Interacts with TRAPPC2. Dimerization requires a conformation change that leads to the exposure of a large hydrophobic surface. In vivo, this may lead to membrane insertion.

It is found in the nucleus. Its subcellular location is the nucleus membrane. The protein resides in the cytoplasm. It localises to the cell membrane. The protein localises to the endoplasmic reticulum. The enzyme catalyses L-dehydroascorbate + 2 glutathione = glutathione disulfide + L-ascorbate. It carries out the reaction chloride(in) = chloride(out). It catalyses the reaction iodide(out) = iodide(in). The catalysed reaction is thiocyanate(in) = thiocyanate(out). The enzyme catalyses nitrate(in) = nitrate(out). It carries out the reaction bromide(in) = bromide(out). It catalyses the reaction fluoride(in) = fluoride(out). In the soluble state, catalyzes glutaredoxin-like thiol disulfide exchange reactions with reduced glutathione as electron donor. Reduces selenite and dehydroascorbate and may act as an antioxidant during oxidative stress response. Can insert into membranes and form voltage-dependent multi-ion conductive channels. Membrane insertion seems to be redox-regulated and may occur only under oxidizing conditions. Involved in regulation of the cell cycle. This is Chloride intracellular channel protein 1 (CLIC1) from Oryctolagus cuniculus (Rabbit).